The sequence spans 255 residues: MASHVIVKFITAAILIGSCYANYCDQSLCRRGPHVACNAPTQFGSACGQEPKFVKMDARMKNLLLKKHNELRAEIACGKHGFPQAARMPTLVWDDELAHIASFNARKCIFAHDKCRNTREFKFAGQNLAITAFAGYNFQAADRAENFTQEWFNEHKDCPKSYVDSYPMSHSGPQIGHFTQMVNDRAWKMGCSMVHYKNGRVIKYYLVCNYSMTNMIEEPIYTRGSAGSKCQTGQNPQYRGLCSPREKVRSESYRG.

Residues 1–21 (MASHVIVKFITAAILIGSCYA) form the signal peptide. Positions 65 to 210 (LKKHNELRAE…VIKYYLVCNY (146 aa)) constitute an SCP domain. Residues asparagine 146 and asparagine 209 are each glycosylated (N-linked (GlcNAc...) asparagine).

The protein belongs to the CRISP family. Interacts with human LRPPRC; the interaction interrupts association between BECN1 and LRPPRC. Interacts with human CD4. As to quaternary structure, (Microbial infection) Interacts with Zika virus envelope protein E and Zika virus-like particles; the interaction does not affect Zika virus replication in human endothelial cells and keratinocytes. As to expression, saliva (at protein level). Female salivary gland. No or low-level expression in female hemolymph, midgut, Malpighian tubule system and ovary. No or low-level expression in male tissues.

Its subcellular location is the secreted. It localises to the host endosome. The protein resides in the host mitochondrion. Functionally, activates autophagy in human monocytic cells, dendritic cells and macrophages. Promotes activation of human CD4(+) T-cells. Does not affect cytokine expression in human monocytic cells. Its function is as follows. (Microbial infection) Promotes dengue virus type 2 replication in human monocytic cells, dendritic cells and macrophages. Pro-viral properties are linked to BECN1-mediated autophagy activation in the host. Does not directly interact with the purified envelope protein of dengue virus type 2. (Microbial infection) Promotes Zika virus replication in human monocytic cells, dendritic cells and macrophages. Facilitates Zika virus transmission from infected mosquitoes to the host in mouse model. Pro-viral properties are linked to BECN1-mediated autophagy activation in the host. Does not affect Zika virus replication in human endothelial cells and keratinocytes. In terms of biological role, (Microbial infection) Promotes Semliki Forest virus replication in human monocytic cells. Functionally, (Microbial infection) Does not influence Batai virus replication in human monocytic cells. In Aedes aegypti (Yellowfever mosquito), this protein is Venom allergen-1.